The following is a 366-amino-acid chain: L-idonate 5-dehydrogenase (366 aa).

7 residues coordinate Zn(2+): Cys-56, His-81, Cys-111, Cys-114, Cys-117, Cys-125, and Glu-167.

The protein belongs to the zinc-containing alcohol dehydrogenase family. The cofactor is Zn(2+).

It carries out the reaction L-idonate + NAD(+) = 5-dehydro-D-gluconate + NADH + H(+). The protein operates within carbohydrate acid metabolism; L-idonate degradation. In terms of biological role, involved in the catabolism of ascorbate to tartrate. The enzyme has no activity with NADP(+). This is L-idonate 5-dehydrogenase from Vitis vinifera (Grape).